We begin with the raw amino-acid sequence, 423 residues long: Kynureninase (423 aa).

Residues leucine 105, serine 106, 133–136, aspartate 218, histidine 221, and tyrosine 243 each bind pyridoxal 5'-phosphate; that span reads FPSD. Position 244 is an N6-(pyridoxal phosphate)lysine (lysine 244). 2 residues coordinate pyridoxal 5'-phosphate: tryptophan 273 and asparagine 301.

Belongs to the kynureninase family. In terms of assembly, homodimer. The cofactor is pyridoxal 5'-phosphate.

It catalyses the reaction L-kynurenine + H2O = anthranilate + L-alanine + H(+). It carries out the reaction 3-hydroxy-L-kynurenine + H2O = 3-hydroxyanthranilate + L-alanine + H(+). The protein operates within amino-acid degradation; L-kynurenine degradation; L-alanine and anthranilate from L-kynurenine: step 1/1. It participates in cofactor biosynthesis; NAD(+) biosynthesis; quinolinate from L-kynurenine: step 2/3. In terms of biological role, catalyzes the cleavage of L-kynurenine (L-Kyn) and L-3-hydroxykynurenine (L-3OHKyn) into anthranilic acid (AA) and 3-hydroxyanthranilic acid (3-OHAA), respectively. This Xanthomonas oryzae pv. oryzae (strain MAFF 311018) protein is Kynureninase.